The primary structure comprises 400 residues: Acetate kinase (400 aa).

Asparagine 10 is a Mg(2+) binding site. Lysine 17 is an ATP binding site. A substrate-binding site is contributed by arginine 91. Catalysis depends on aspartate 148, which acts as the Proton donor/acceptor. ATP is bound by residues 208–212, 283–285, and 331–335; these read HLGNG, DCR, and GIGEN. Glutamate 385 is a binding site for Mg(2+).

This sequence belongs to the acetokinase family. As to quaternary structure, homodimer. Mg(2+) serves as cofactor. It depends on Mn(2+) as a cofactor.

Its subcellular location is the cytoplasm. It catalyses the reaction acetate + ATP = acetyl phosphate + ADP. It functions in the pathway metabolic intermediate biosynthesis; acetyl-CoA biosynthesis; acetyl-CoA from acetate: step 1/2. Functionally, catalyzes the formation of acetyl phosphate from acetate and ATP. Can also catalyze the reverse reaction. This chain is Acetate kinase, found in Shewanella putrefaciens (strain CN-32 / ATCC BAA-453).